The following is a 353-amino-acid chain: Fe(3+) ions import ATP-binding protein FbpC (353 aa).

Residues 9-239 (VTFENVTKKF…PASAFIADFM (231 aa)) enclose the ABC transporter domain. 41–48 (GPSGCGKT) is an ATP binding site.

It belongs to the ABC transporter superfamily. Fe(3+) ion importer (TC 3.A.1.10) family. As to quaternary structure, the complex is composed of two ATP-binding proteins (FbpC), two transmembrane proteins (FbpB) and a solute-binding protein (FbpA).

The protein localises to the cell inner membrane. It carries out the reaction Fe(3+)(out) + ATP + H2O = Fe(3+)(in) + ADP + phosphate + H(+). In terms of biological role, part of the ABC transporter complex FbpABC involved in Fe(3+) ions import. Responsible for energy coupling to the transport system. This Brucella suis biovar 1 (strain 1330) protein is Fe(3+) ions import ATP-binding protein FbpC.